The chain runs to 962 residues: SH3 domain-binding protein 4 (962 aa).

One can recognise an SH3 1 domain in the interval 55–114; sequence GNAKEVIAIKDYCPNNFTTLKFSKGDHLYVLDTSGGEWWYAHNTTEMGYIPSSYVQPLNY. A phosphoserine mark is found at serine 131, serine 245, serine 250, serine 278, and serine 295. The region spanning 316–453 is the ZU5 domain; the sequence is TNIVCKLDSS…LEPCMYLAIV (138 aa). Position 636 is a phosphoserine (serine 636). Residues 653–723 form the SH3 2 domain; it reads SSLKFGKLLK…HTKNVLVVGK (71 aa).

As to quaternary structure, homodimer or homooligomer. Interacts with DNM2, EPS15, clathrin, the adapter protein complex 2/AP-2 and TFRC. Interacts with the Rag GTPases RRAGA, RRAGB, RRAGC and RRAGD; the interaction is most probably direct, preferentially occurs with their inactive GDP-bound form and is negatively regulated by amino acids. In terms of processing, phosphorylated upon EGF stimulation. Phosphorylation prevents interaction with DNM2.

It is found in the membrane. The protein resides in the clathrin-coated pit. Its subcellular location is the cytoplasmic vesicle. The protein localises to the clathrin-coated vesicle. It localises to the nucleus. Functionally, may function in transferrin receptor internalization at the plasma membrane through a cargo-specific control of clathrin-mediated endocytosis. Alternatively, may act as a negative regulator of the amino acid-induced TOR signaling by inhibiting the formation of active Rag GTPase complexes. Preferentially binds inactive Rag GTPase complexes and prevents their interaction with the mTORC1 complex inhibiting its relocalization to lysosomes and its activation. Thereby, may indirectly regulate cell growth, proliferation and autophagy. This is SH3 domain-binding protein 4 (Sh3bp4) from Mus musculus (Mouse).